The following is a 760-amino-acid chain: Anti-sigma-I factor RsgI6 (760 aa).

At Met-1 to Tyr-55 the chain is on the cytoplasmic side. The region spanning Ile-2–Lys-49 is the RsgI N-terminal anti-sigma domain. Residues Leu-56–Ile-76 traverse the membrane as a helical segment. The Extracellular segment spans residues Asn-77–Pro-760. Positions Ala-274 to Gln-352 are disordered. Over residues Leu-291–Gln-352 the composition is skewed to polar residues. The GH10 domain maps to Asp-402 to Leu-701. The active-site Proton donor is Glu-538. The active-site Nucleophile is Glu-635.

The protein in the C-terminal section; belongs to the glycosyl hydrolase 10 (cellulase F) family. As to quaternary structure, interacts (via RsgI N-terminal anti-sigma domain) with SigI6.

The protein resides in the cell membrane. It carries out the reaction Endohydrolysis of (1-&gt;4)-beta-D-xylosidic linkages in xylans.. It functions in the pathway glycan degradation; xylan degradation. In terms of biological role, anti-sigma factor for SigI6. Negatively regulates SigI6 activity through direct interaction. Binding of the polysaccharide substrate to the extracellular C-terminal sensing domain of RsgI6 may induce a conformational change in its N-terminal cytoplasmic region, leading to the release and activation of SigI6. Binds to and hydrolyzes insoluble and soluble xylan substrates. Has low enzymatic activity. The sequence is that of Anti-sigma-I factor RsgI6 from Acetivibrio thermocellus (strain ATCC 27405 / DSM 1237 / JCM 9322 / NBRC 103400 / NCIMB 10682 / NRRL B-4536 / VPI 7372) (Clostridium thermocellum).